The sequence spans 184 residues: ATP synthase subunit b, chloroplastic (184 aa).

The chain crosses the membrane as a helical span at residues isoleucine 31–leucine 49.

It belongs to the ATPase B chain family. F-type ATPases have 2 components, F(1) - the catalytic core - and F(0) - the membrane proton channel. F(1) has five subunits: alpha(3), beta(3), gamma(1), delta(1), epsilon(1). F(0) has four main subunits: a(1), b(1), b'(1) and c(10-14). The alpha and beta chains form an alternating ring which encloses part of the gamma chain. F(1) is attached to F(0) by a central stalk formed by the gamma and epsilon chains, while a peripheral stalk is formed by the delta, b and b' chains.

The protein resides in the plastid. It is found in the chloroplast thylakoid membrane. In terms of biological role, f(1)F(0) ATP synthase produces ATP from ADP in the presence of a proton or sodium gradient. F-type ATPases consist of two structural domains, F(1) containing the extramembraneous catalytic core and F(0) containing the membrane proton channel, linked together by a central stalk and a peripheral stalk. During catalysis, ATP synthesis in the catalytic domain of F(1) is coupled via a rotary mechanism of the central stalk subunits to proton translocation. Component of the F(0) channel, it forms part of the peripheral stalk, linking F(1) to F(0). This chain is ATP synthase subunit b, chloroplastic, found in Pinus thunbergii (Japanese black pine).